A 698-amino-acid polypeptide reads, in one-letter code: Putative transposon gamma-delta 80.3 kDa protein (698 aa).

The sequence is that of Putative transposon gamma-delta 80.3 kDa protein (tnpX) from Escherichia coli (strain K12).